A 792-amino-acid chain; its full sequence is MSAGTAPAAPRYAPDDPSLPKPWRGLVDGTTGYLYYWNPETNITQYEKPLPPEDQLPPPPPLPPPPPRSGRGDRDRDRRDRSRSRTPPRRDHRDRDRDRDRRHDDHRSAPSHHHPLPAAAAIAADDPSTEAYRHRHEITVVGDNVPAPITSFETGGFPPEILKEIQRAGFSSPTPIQAQSWPIALQCQDVVAIAKTGSGKTLGYLLPGFMHIKRLQNNPRSGPTVLVLAPTRELATQILEEAVKFGRSSRISSTCLYGGAPKGPQLRDLDRGVDVVVATPGRLNDILEMRRISLKQVSYLVLDEADRMLDMGFEPQIRKIVKEIPPRRQTLMYTATWPKEVRRIAEDLLVHPVQVTIGSVDELVANSAITQNVELITPSEKLRRLEQILRSQDSGSKVLIFCTTKRMCDQLARTLTRQFGASAIHGDKSQSEREKVLSHFRSGRSPILVATDVAARGLDIKDIRVVINYDFPTGIEDYVHRIGRTGRAGATGVAYTFFCDQDSKYAADLIKILEGANQRVPRDLADMASRGGRGGRKRNRWATRSDRGGSHSELDSRYGGRDGLSGSSGRLDSSRSSRRHDYGDDGRSRRSGRGRSRSRSRSDSDRYSRSPKRSRRHSRSRTRSRSRSRSRSYTRNRRASRSRSRSPGASRRHERSATGSGSALPDSGHGERKRTPEADPSRNHTNHSDPKDDRHPEDGKVGKVDLDRSPTPQDKSGPYSPAYNGKTSRSVSPGNQVEGNNKAAEVSKNPDPSSPPHHGKTREDEEEGMIDEDGEIADDPRANATVQNGGDN.

Positions 1 to 16 are enriched in low complexity; sequence MSAGTAPAAPRYAPDD. Disordered regions lie at residues 1–25 and 44–118; these read MSAG…PWRG and TQYE…PLPA. The WW domain occupies 17-51; sequence PSLPKPWRGLVDGTTGYLYYWNPETNITQYEKPLP. Positions 52-68 are enriched in pro residues; the sequence is PEDQLPPPPPLPPPPPR. Composition is skewed to basic and acidic residues over residues 70–80 and 88–108; these read GRGDRDRDRRD and PRRD…DHRS. Positions 150–178 match the Q motif motif; that stretch reads TSFETGGFPPEILKEIQRAGFSSPTPIQA. Positions 181–355 constitute a Helicase ATP-binding domain; sequence WPIALQCQDV…EDLLVHPVQV (175 aa). 194-201 contributes to the ATP binding site; that stretch reads AKTGSGKT. Positions 303–306 match the DEAD box motif; the sequence is DEAD. One can recognise a Helicase C-terminal domain in the interval 384–528; that stretch reads RLEQILRSQD…RVPRDLADMA (145 aa). Positions 523–792 are disordered; sequence DLADMASRGG…NATVQNGGDN (270 aa). Basic and acidic residues-rich tracts occupy residues 543–560 and 572–588; these read TRSD…RYGG and DSSR…DGRS. Basic residues-rich tracts occupy residues 589-599 and 609-654; these read RRSGRGRSRSR and RSPK…RRHE. The segment covering 668 to 708 has biased composition (basic and acidic residues); it reads GHGERKRTPEADPSRNHTNHSDPKDDRHPEDGKVGKVDLDR. Residues 725-739 are compositionally biased toward polar residues; sequence GKTSRSVSPGNQVEG. Acidic residues predominate over residues 764 to 777; the sequence is DEEEGMIDEDGEIA.

It belongs to the DEAD box helicase family. DDX5/DBP2 subfamily.

It localises to the nucleus. The catalysed reaction is ATP + H2O = ADP + phosphate + H(+). Functionally, ATP-dependent RNA helicase involved nonsense-mediated mRNA decay and ribosome biogenesis through rRNA processing. This chain is DEAD-box ATP-dependent RNA helicase 40, found in Oryza sativa subsp. japonica (Rice).